We begin with the raw amino-acid sequence, 296 residues long: Nitrogenase iron protein 2 (296 aa).

11-18 (GKGGIGKS) serves as a coordination point for ATP. A [4Fe-4S] cluster-binding site is contributed by cysteine 99. At arginine 102 the chain carries ADP-ribosylarginine; by dinitrogenase reductase ADP-ribosyltransferase. Cysteine 133 lines the [4Fe-4S] cluster pocket.

This sequence belongs to the NifH/BchL/ChlL family. In terms of assembly, homodimer. The cofactor is [4Fe-4S] cluster. In terms of processing, the reversible ADP-ribosylation of Arg-102 inactivates the nitrogenase reductase and regulates nitrogenase activity.

The enzyme catalyses N2 + 8 reduced [2Fe-2S]-[ferredoxin] + 16 ATP + 16 H2O = H2 + 8 oxidized [2Fe-2S]-[ferredoxin] + 2 NH4(+) + 16 ADP + 16 phosphate + 6 H(+). The key enzymatic reactions in nitrogen fixation are catalyzed by the nitrogenase complex, which has 2 components: the iron protein and the molybdenum-iron protein. This chain is Nitrogenase iron protein 2 (nifH2), found in Azorhizobium caulinodans (strain ATCC 43989 / DSM 5975 / JCM 20966 / LMG 6465 / NBRC 14845 / NCIMB 13405 / ORS 571).